The sequence spans 260 residues: Homeobox protein CDX-1 (260 aa).

The segment at residues 149–208 (KDKYRVVYTDHQRLELEKEFHYSRYITIRRKAELAAALGLTERQVKIWFQNRRAKERKVN) is a DNA-binding region (homeobox). An interaction with DNA region spans residues 152–173 (YRVVYTDHQRLELEKEFHYSRY). Residues 191-202 (RQVKIWFQNRRA) form an interaction with 5-mCpG DNA region. Residues 204 to 260 (ERKVNKKKLQQQSQPTSTTTPTPPAVGTPGPMGTLCSGSAPSLVSSSPLTIKEEFMP) are disordered. Low complexity-rich tracts occupy residues 213-223 (QQQSQPTSTTT) and 240-252 (SGSA…SSPL).

The protein belongs to the Caudal homeobox family.

The protein resides in the nucleus. Functionally, plays a role in transcriptional regulation. Involved in activated KRAS-mediated transcriptional activation of PRKD1. Binds to the PRKD1 promoter. Could play a role in the terminal differentiation of the intestine. Binds preferentially to methylated DNA. This chain is Homeobox protein CDX-1 (CDX1), found in Gallus gallus (Chicken).